A 136-amino-acid chain; its full sequence is Nucleoside diphosphate kinase (136 aa).

Lysine 10, phenylalanine 58, arginine 86, threonine 92, arginine 104, and asparagine 114 together coordinate ATP. The Pros-phosphohistidine intermediate role is filled by histidine 117.

It belongs to the NDK family. Homotetramer. It depends on Mg(2+) as a cofactor.

It is found in the cytoplasm. The enzyme catalyses a 2'-deoxyribonucleoside 5'-diphosphate + ATP = a 2'-deoxyribonucleoside 5'-triphosphate + ADP. It carries out the reaction a ribonucleoside 5'-diphosphate + ATP = a ribonucleoside 5'-triphosphate + ADP. Major role in the synthesis of nucleoside triphosphates other than ATP. The ATP gamma phosphate is transferred to the NDP beta phosphate via a ping-pong mechanism, using a phosphorylated active-site intermediate. The polypeptide is Nucleoside diphosphate kinase (Mycolicibacterium paratuberculosis (strain ATCC BAA-968 / K-10) (Mycobacterium paratuberculosis)).